The sequence spans 570 residues: Serine/threonine-protein kinase STY17 (570 aa).

A disordered region spans residues 112–145 (LNGNSGDVDPSDPAVNEDAQSSYNSRSLAPPTFG). The span at 129-145 (DAQSSYNSRSLAPPTFG) shows a compositional bias: polar residues. The region spanning 180–260 (EITFSTIDRP…PCSKQKSITF (81 aa)) is the ACT domain. The Protein kinase domain occupies 292–545 (LKIEKKVACG…EIIEMLNQLI (254 aa)). ATP contacts are provided by residues 298–306 (VACGSYGEL) and Lys-319. The active-site Proton acceptor is Asp-413. Ser-441 is subject to Phosphoserine. Thr-445 bears the Phosphothreonine mark.

The protein belongs to the protein kinase superfamily. Ser/Thr protein kinase family. Post-translationally, autophosphorylated on serine and threonine residues. Autophosphorylated at Thr-445.

It localises to the cytoplasm. Its subcellular location is the cytosol. It catalyses the reaction L-seryl-[protein] + ATP = O-phospho-L-seryl-[protein] + ADP + H(+). The enzyme catalyses L-threonyl-[protein] + ATP = O-phospho-L-threonyl-[protein] + ADP + H(+). Activated by autophosphorylation at Thr-445. Functionally, serine/threonine protein kinase that specifically phosphorylates chloroplast precursor proteins in the cytosol within the cleavable presequences (transit peptides). May be part of a cytosolic regulatory network involved in chloroplast protein import. Does not phosphorylate mitochondrion precursor proteins. Specific for ATP and does not utilize other NTPs. Plays a role in chloroplast biogenesis and differentiation in cotyledons, possibly through phosphorylation of chloroplast preproteins. This Arabidopsis thaliana (Mouse-ear cress) protein is Serine/threonine-protein kinase STY17.